A 401-amino-acid chain; its full sequence is MSLVSQARSLGKYFLLFDNLLVVLGFFVVFPLISIHFVEQLGWAALVVGFALGLRQFVQQGLGIFGGAIADRFGAKPMIVTGMLLRALGFAFIALATEPWILWLACILSALGGTLFDPPRTALVIKLTRPHERGRFFSLLLMQDSAGAVIGALIGSWLLQYDFQFVCWTGAGVFVLAAIWNALFLPAYRISTTRTPIWEGMERVIKDRRFFTYVLTLTGYFMLSVQVMLMFPIIVNEIAGTPAAVKWMYAIEATLSLTLLYPIARWSEKRFRLEQRLMAGLFLMSLSMFPVGLIGEINTLFGLICLFYLGTVTAEPARETLSASLADPRARGSYMGFSRLGLALGGALGYTGGGWLYDTGHALNIPQLPWFLLGIIGLITLYALHRQFNQRKIESAMLSGN.

Transmembrane regions (helical) follow at residues 13–33, 34–54, 78–95, 99–116, 139–159, 165–185, 214–234, 243–263, 289–309, 340–360, and 365–385; these read YFLL…FPLI, SIHF…ALGL, MIVT…FIAL, PWIL…GTLF, LLLM…SWLL, FVCW…ALFL, VLTL…FPII, AAVK…LYPI, FPVG…LFYL, LGLA…YDTG, and IPQL…YALH.

This sequence belongs to the major facilitator superfamily. DHA1 family. MdtH (TC 2.A.1.2.21) subfamily.

Its subcellular location is the cell inner membrane. The protein is Multidrug resistance protein MdtH of Photorhabdus laumondii subsp. laumondii (strain DSM 15139 / CIP 105565 / TT01) (Photorhabdus luminescens subsp. laumondii).